The sequence spans 261 residues: Taurine import ATP-binding protein TauB (261 aa).

The ABC transporter domain occupies 4–233 (LQLEGIGAHY…RYSAGESARA (230 aa)). An ATP-binding site is contributed by 38–45 (GPSGSGKT).

It belongs to the ABC transporter superfamily. Taurine importer (TC 3.A.1.17.1) family. The complex is composed of two ATP-binding proteins (TauB), two transmembrane proteins (TauC) and a solute-binding protein (TauA).

Its subcellular location is the cell inner membrane. The enzyme catalyses taurine(out) + ATP + H2O = taurine(in) + ADP + phosphate + H(+). Part of the ABC transporter complex TauABC involved in taurine import. Responsible for energy coupling to the transport system. This is Taurine import ATP-binding protein TauB from Pseudomonas syringae pv. tomato (strain ATCC BAA-871 / DC3000).